Here is a 348-residue protein sequence, read N- to C-terminus: D-alanine--D-alanine ligase (348 aa).

The region spanning 132–334 (KRVLESIGIP…YPDLIEELVT (203 aa)) is the ATP-grasp domain. Position 162 to 217 (162 to 217 (LARLTFPIFVKPANMGSSVGISKAQTKVELRKAIQLALTYDSRVLIEQGVVAREIE)) interacts with ATP. Mg(2+)-binding residues include Asp-288, Glu-301, and Asn-303.

Belongs to the D-alanine--D-alanine ligase family. Requires Mg(2+) as cofactor. Mn(2+) serves as cofactor.

Its subcellular location is the cytoplasm. The enzyme catalyses 2 D-alanine + ATP = D-alanyl-D-alanine + ADP + phosphate + H(+). It participates in cell wall biogenesis; peptidoglycan biosynthesis. Its function is as follows. Cell wall formation. This chain is D-alanine--D-alanine ligase, found in Streptococcus pyogenes serotype M18 (strain MGAS8232).